A 451-amino-acid chain; its full sequence is Cobalamin reductase PduS (451 aa).

4Fe-4S ferredoxin-type domains follow at residues 255-284 (TVLS…HELS) and 300-330 (PQLL…MRIN). [4Fe-4S] cluster is bound by residues Cys264, Cys267, Cys270, Cys274, Cys309, Cys312, Cys315, and Cys320.

Belongs to the PduS cobalamin reductase family. As to quaternary structure, monomer, forms a complex with PduO. Interacts with PduT, probably via the N-terminus of PduS. [4Fe-4S] cluster serves as cofactor. Requires FMN as cofactor.

The protein localises to the bacterial microcompartment. It functions in the pathway polyol metabolism; 1,2-propanediol degradation. A bifunctional cobalamin reductase that converts cob(III)alamin to cob(II)alamin and then to cob(I)alamin in the bacterial microcompartment (BMC) dedicated to 1,2-propanediol (1,2-PD) degradation. PduS and PduO allow regeneration of the adenosylcobalamin cofactor within the BMC. Cobalamin reduction probably occurs spontaneously in the presence of free reduced flavin nucleotides, this protein may be involved in electron transfer for this reduction. In terms of biological role, expression of a cosmid containing the full 21-gene pdu operon in E.coli allows E.coli to grow on 1,2-propanediol (1,2-PD) with the appearance of BMCs in its cytoplasm. Functionally, the 1,2-PD-specific bacterial microcompartment (BMC) concentrates low levels of 1,2-PD catabolic enzymes, concentrates volatile reaction intermediates thus enhancing pathway flux and keeps the level of toxic, mutagenic propionaldehyde low. The sequence is that of Cobalamin reductase PduS from Citrobacter freundii.